The chain runs to 573 residues: Globulin-1 S allele (573 aa).

A signal peptide (or 21) is located at residues 1–18 (MVSARIVVLLAVLLCAAA). Positions 19–86 (AVASSWEDDN…DRSGEGSSED (68 aa)) are excised as a propeptide. The disordered stretch occupies residues 65–102 (EKRQERSRHEADDRSGEGSSEDEREREQEKEEKQKDRR). 2 Cupin type-1 domains span residues 104-262 (YVFD…DRLE) and 311-493 (YSLL…EEVD). Residues 288–315 (RHASEGGHGPHWPLPPFGESRGPYSLLD) form a disordered region. N-linked (GlcNAc...) asparagine glycosylation occurs at Asn349. Disordered regions lie at residues 382-416 (PHRQ…EVGQ) and 498-573 (SRRE…TARM). A compositionally biased stretch (basic and acidic residues) spans 390 to 402 (ESERERGKGRRSE). Residues 403–413 (EEEESSEEQEE) are compositionally biased toward acidic residues. 2 stretches are compositionally biased toward basic and acidic residues: residues 525-542 (EERH…REER) and 549-561 (REGR…REEV).

Belongs to the 7S seed storage protein family. In terms of processing, three protein-processing steps occur in the formation of the mature protein from the primary translation product.

The sequence is that of Globulin-1 S allele (GLB1) from Zea mays (Maize).